Reading from the N-terminus, the 536-residue chain is Bicoumarin synthase desC (536 aa).

Residues Y12 to I32 traverse the membrane as a helical segment. 2 N-linked (GlcNAc...) asparagine glycosylation sites follow: N149 and N371. C480 lines the heme pocket.

It belongs to the cytochrome P450 family. The cofactor is heme.

Its subcellular location is the membrane. It carries out the reaction 2 7-demethylsiderin + NADPH + O2 = desertorin A + NADP(+) + 2 H2O. Its pathway is secondary metabolite biosynthesis. Non-reducing polyketide synthase; part of the gene cluster that mediates the biosynthesis of the bicoumarin desertorin. The non-reducing polyketide synthase desS first catalyzes the formation of the pentaketidic 4,7-dihydroxy-5-methylcoumarin from acetyl coenzyme A and 4 malonyl coenzyme A molecules. Further O-methylation by desB leads to the formation of 7-demethylsiderin. Then, an oxidative phenol coupling catalyzed by the cytochrome P450 monooxygenase desC forms the 6,8'-dimer M-desertorin A via dimerization the monomeric precursor, 7-demethylsiderin. M-desertorin A is further converted to M-desertorin C. This Aspergillus desertorum (Emericella desertorum) protein is Bicoumarin synthase desC.